A 1381-amino-acid chain; its full sequence is DNA-directed RNA polymerase subunit beta'' (1381 aa).

C220, C293, C300, and C303 together coordinate Zn(2+).

It belongs to the RNA polymerase beta' chain family. RpoC2 subfamily. In plastids the minimal PEP RNA polymerase catalytic core is composed of four subunits: alpha, beta, beta', and beta''. When a (nuclear-encoded) sigma factor is associated with the core the holoenzyme is formed, which can initiate transcription. It depends on Zn(2+) as a cofactor.

The protein resides in the plastid. The protein localises to the chloroplast. It catalyses the reaction RNA(n) + a ribonucleoside 5'-triphosphate = RNA(n+1) + diphosphate. In terms of biological role, DNA-dependent RNA polymerase catalyzes the transcription of DNA into RNA using the four ribonucleoside triphosphates as substrates. The chain is DNA-directed RNA polymerase subunit beta'' from Draba nemorosa (Woodland whitlowgrass).